Reading from the N-terminus, the 65-residue chain is MYKLKTRKAAAKRYKAVGNKKISRRKAFRSHLLQKKSTNRKRQLSQVVIASPGDTKKIYLMLPYL.

This sequence belongs to the bacterial ribosomal protein bL35 family.

Its subcellular location is the plastid. The protein localises to the cyanelle. In Cyanophora paradoxa, this protein is Large ribosomal subunit protein bL35c (rpl35).